A 150-amino-acid chain; its full sequence is Ribosome maturation factor RimP (150 aa).

It belongs to the RimP family.

It localises to the cytoplasm. In terms of biological role, required for maturation of 30S ribosomal subunits. In Salmonella dublin (strain CT_02021853), this protein is Ribosome maturation factor RimP.